The following is a 153-amino-acid chain: SsrA-binding protein (153 aa).

A disordered region spans residues 129–153 (KREDMKKKDQSREMAQALREKSKSH).

Belongs to the SmpB family.

The protein localises to the cytoplasm. Functionally, required for rescue of stalled ribosomes mediated by trans-translation. Binds to transfer-messenger RNA (tmRNA), required for stable association of tmRNA with ribosomes. tmRNA and SmpB together mimic tRNA shape, replacing the anticodon stem-loop with SmpB. tmRNA is encoded by the ssrA gene; the 2 termini fold to resemble tRNA(Ala) and it encodes a 'tag peptide', a short internal open reading frame. During trans-translation Ala-aminoacylated tmRNA acts like a tRNA, entering the A-site of stalled ribosomes, displacing the stalled mRNA. The ribosome then switches to translate the ORF on the tmRNA; the nascent peptide is terminated with the 'tag peptide' encoded by the tmRNA and targeted for degradation. The ribosome is freed to recommence translation, which seems to be the essential function of trans-translation. This Geobacter sulfurreducens (strain ATCC 51573 / DSM 12127 / PCA) protein is SsrA-binding protein.